The sequence spans 289 residues: Phosphatidylglycerol--prolipoprotein diacylglyceryl transferase (289 aa).

A run of 3 helical transmembrane segments spans residues L13 to W33, F61 to Y81, and G99 to M119. R144 contacts a 1,2-diacyl-sn-glycero-3-phospho-(1'-sn-glycerol). 2 consecutive transmembrane segments (helical) span residues G218 to V238 and L250 to I270.

The protein belongs to the Lgt family.

The protein resides in the cell inner membrane. It catalyses the reaction L-cysteinyl-[prolipoprotein] + a 1,2-diacyl-sn-glycero-3-phospho-(1'-sn-glycerol) = an S-1,2-diacyl-sn-glyceryl-L-cysteinyl-[prolipoprotein] + sn-glycerol 1-phosphate + H(+). It functions in the pathway protein modification; lipoprotein biosynthesis (diacylglyceryl transfer). Catalyzes the transfer of the diacylglyceryl group from phosphatidylglycerol to the sulfhydryl group of the N-terminal cysteine of a prolipoprotein, the first step in the formation of mature lipoproteins. The chain is Phosphatidylglycerol--prolipoprotein diacylglyceryl transferase from Phenylobacterium zucineum (strain HLK1).